Reading from the N-terminus, the 149-residue chain is Nucleoside diphosphate kinase (149 aa).

ATP contacts are provided by K9, F57, R85, T91, R102, and N112. H115 acts as the Pros-phosphohistidine intermediate in catalysis.

This sequence belongs to the NDK family. As to quaternary structure, homotetramer. Mg(2+) serves as cofactor.

It localises to the cytoplasm. The catalysed reaction is a 2'-deoxyribonucleoside 5'-diphosphate + ATP = a 2'-deoxyribonucleoside 5'-triphosphate + ADP. It carries out the reaction a ribonucleoside 5'-diphosphate + ATP = a ribonucleoside 5'-triphosphate + ADP. In terms of biological role, major role in the synthesis of nucleoside triphosphates other than ATP. The ATP gamma phosphate is transferred to the NDP beta phosphate via a ping-pong mechanism, using a phosphorylated active-site intermediate. The chain is Nucleoside diphosphate kinase from Desulfitobacterium hafniense (strain Y51).